The primary structure comprises 192 residues: GTP-binding protein RHO2 (192 aa).

A GTP-binding site is contributed by 14–21; the sequence is GDGACGKT. The short motif at 36 to 44 is the Effector region element; it reads YHPTVFENY. Residues 61–65 and 119–122 contribute to the GTP site; these read DTAGQ and LKKD. Cys188 carries the S-palmitoyl cysteine lipid modification. The residue at position 189 (Cys189) is a Cysteine methyl ester. A lipid anchor (S-geranylgeranyl cysteine) is attached at Cys189. Positions 190–192 are cleaved as a propeptide — removed in mature form; the sequence is IIL.

It belongs to the small GTPase superfamily. Rho family. In terms of assembly, interacts with BEM4.

The protein localises to the cell membrane. It carries out the reaction GTP + H2O = GDP + phosphate + H(+). This chain is GTP-binding protein RHO2 (RHO2), found in Saccharomyces cerevisiae (strain ATCC 204508 / S288c) (Baker's yeast).